We begin with the raw amino-acid sequence, 329 residues long: Quinone-oxidoreductase QR1, chloroplastic (329 aa).

Belongs to the zinc-containing alcohol dehydrogenase family. Quinone oxidoreductase subfamily.

It localises to the plastid. The protein localises to the chloroplast outer membrane. The catalysed reaction is 2 a quinone + NADPH + H(+) = 2 a 1,4-benzosemiquinone + NADP(+). Inhibited by dicumarol. Its function is as follows. NADPH-dependent single-electron reducing quinone reductase. Involved in haustorium initiation in parasitic plants through redox cycling of exogenous haustorium-inducing factors. Can use 9,10-phenanthrenequinone (PAQ), 1,2-naphthoquinone, 5-hydroxy-1,4-naphthoquinone (juglone) and 2,6-dimethoxy-p-benzoquinone (DMBQ) as substrates, but has no activity with menadione, diamide, 2,3-dimethoxy-5-methyl-1,4-benzoquinone or 1,4-naphthoquinone. This Triphysaria versicolor (Yellow owl's clover) protein is Quinone-oxidoreductase QR1, chloroplastic.